We begin with the raw amino-acid sequence, 75 residues long: Small ribosomal subunit protein bS18 (75 aa).

The protein belongs to the bacterial ribosomal protein bS18 family. In terms of assembly, part of the 30S ribosomal subunit. Forms a tight heterodimer with protein bS6.

Functionally, binds as a heterodimer with protein bS6 to the central domain of the 16S rRNA, where it helps stabilize the platform of the 30S subunit. This chain is Small ribosomal subunit protein bS18, found in Acinetobacter baumannii (strain AB307-0294).